The sequence spans 548 residues: Hydroxylamine reductase (548 aa).

[4Fe-4S] cluster is bound by residues Cys3, Cys6, Cys15, and Cys21. His239, Glu263, Cys307, Cys401, Cys429, Cys454, Glu489, and Lys491 together coordinate hybrid [4Fe-2O-2S] cluster. Cys401 is subject to Cysteine persulfide.

The protein belongs to the HCP family. The cofactor is [4Fe-4S] cluster. Hybrid [4Fe-2O-2S] cluster serves as cofactor.

The protein resides in the cytoplasm. It carries out the reaction A + NH4(+) + H2O = hydroxylamine + AH2 + H(+). In terms of biological role, catalyzes the reduction of hydroxylamine to form NH(3) and H(2)O. In Desulfosudis oleivorans (strain DSM 6200 / JCM 39069 / Hxd3) (Desulfococcus oleovorans), this protein is Hydroxylamine reductase.